We begin with the raw amino-acid sequence, 299 residues long: Protease HtpX homolog (299 aa).

2 helical membrane-spanning segments follow: residues 15–35 and 39–59; these read ILLLVFFLLLALVGYAVGYLF and GLGGLVIALIIGFIYALSMIF. His143 serves as a coordination point for Zn(2+). The active site involves Glu144. Residue His147 participates in Zn(2+) binding. 2 helical membrane passes run 158 to 178 and 198 to 218; these read IAVALASAITMLSSMAGRMMW and IIMLVVSLLAIVLAPLAATLV. Residue Glu227 participates in Zn(2+) binding.

Belongs to the peptidase M48B family. Requires Zn(2+) as cofactor.

It localises to the cell membrane. In Streptococcus pneumoniae (strain Taiwan19F-14), this protein is Protease HtpX homolog.